The following is a 178-amino-acid chain: Photosystem I assembly protein Ycf4 (178 aa).

2 consecutive transmembrane segments (helical) span residues Ile-19–Ser-39 and Leu-61–Ile-81.

It belongs to the Ycf4 family.

The protein localises to the cellular thylakoid membrane. In terms of biological role, seems to be required for the assembly of the photosystem I complex. In Synechococcus sp. (strain CC9311), this protein is Photosystem I assembly protein Ycf4.